Reading from the N-terminus, the 426-residue chain is Serine/threonine-protein kinase ssn3 (426 aa).

Residues 41-368 (YHIVGFISSG…AREALEHPYF (328 aa)) form the Protein kinase domain. Residues 47–55 (ISSGTYGRV) and lysine 71 each bind ATP. Aspartate 173 serves as the catalytic Proton acceptor. The disordered stretch occupies residues 390 to 426 (RVTQDDNDIRSGSLPGTKRSGLPDDSLMGRAAKRLKE).

It belongs to the protein kinase superfamily. CMGC Ser/Thr protein kinase family. CDC2/CDKX subfamily. In terms of assembly, component of the srb8-11 complex, a regulatory module of the Mediator complex. It depends on Mg(2+) as a cofactor.

Its subcellular location is the nucleus. It catalyses the reaction L-seryl-[protein] + ATP = O-phospho-L-seryl-[protein] + ADP + H(+). The catalysed reaction is L-threonyl-[protein] + ATP = O-phospho-L-threonyl-[protein] + ADP + H(+). It carries out the reaction [DNA-directed RNA polymerase] + ATP = phospho-[DNA-directed RNA polymerase] + ADP + H(+). Functionally, component of the srb8-11 complex. The srb8-11 complex is a regulatory module of the Mediator complex which is itself involved in regulation of basal and activated RNA polymerase II-dependent transcription. The srb8-11 complex may be involved in the transcriptional repression of a subset of genes regulated by Mediator. It may inhibit the association of the Mediator complex with RNA polymerase II to form the holoenzyme complex. The srb8-11 complex phosphorylates the C-terminal domain (CTD) of the largest subunit of RNA polymerase II. The polypeptide is Serine/threonine-protein kinase ssn3 (ssn3) (Aspergillus fumigatus (strain ATCC MYA-4609 / CBS 101355 / FGSC A1100 / Af293) (Neosartorya fumigata)).